A 910-amino-acid chain; its full sequence is Staphylococcal nuclease domain-containing protein 1 (910 aa).

A2 bears the N-acetylalanine mark. 3 consecutive TNase-like domains span residues 18–166 (TVQR…MWSE), 193–328 (KPVN…IWRD), and 341–496 (KQFV…LHSK). The residue at position 103 (T103) is a Phosphothreonine. K193 is subject to N6-acetyllysine. Phosphothreonine occurs at positions 235 and 240. 2 consecutive short sequence motifs (nuclear localization signal) follow at residues 321-325 (RRLRI) and 388-392 (KKLRP). S426 bears the Phosphoserine mark. K513 is covalently cross-linked (Glycyl lysine isopeptide (Lys-Gly) (interchain with G-Cter in SUMO2)). Residues 525-660 (GRSEAVVEYV…KQRKEKVWAH (136 aa)) enclose the TNase-like 4 domain. N6-acetyllysine is present on K641. Position 645 is a phosphoserine (S645). The 59-residue stretch at 729-787 (APRRGEFCIAKFVDGEWYRARVEKVESPAKVHVFYIDYGNREILPSTRLGTLPPAFSTR) folds into the Tudor domain. T779 is subject to Phosphothreonine. S785 and S909 each carry phosphoserine.

As to quaternary structure, forms a ternary complex with STAT6 and POLR2A. Associates with the RNA-induced silencing complex (RISC). Interacts with the RISC components AGO2, FMR1 and TNRC6A. Interacts with GTF2E1 and GTF2E2. Interacts with PIM1. Interacts with STAT5. Interacts with SYT11 (via C2 2 domain); the interaction with SYT11 is direct. In terms of processing, phosphorylated by PIM1 in vitro.

It localises to the cytoplasm. Its subcellular location is the nucleus. It is found in the melanosome. It carries out the reaction Endonucleolytic cleavage to nucleoside 3'-phosphates and 3'-phosphooligonucleotide end-products.. Endonuclease that mediates miRNA decay of both protein-free and AGO2-loaded miRNAs. As part of its function in miRNA decay, regulates mRNAs involved in G1-to-S phase transition. Functions as a bridging factor between STAT6 and the basal transcription factor. Plays a role in PIM1 regulation of MYB activity. Functions as a transcriptional coactivator for STAT5. This is Staphylococcal nuclease domain-containing protein 1 (Snd1) from Mus musculus (Mouse).